A 306-amino-acid chain; its full sequence is MKDEHIAVLMGGFSSERSVSLSSGTACADVLEAQGYRVSRVDVDGHIASVLEQLQPDIAFNALHGPFGEDGRIQGVLEYLKIPYTHSGVMASALAMDKGRAKIVVASVGVSIAPSCVMSRFAVGKEHPMEPPYVIKPVCEGSSLGVIIVKENESVPSLNVVGSEWVYADTVIVEKYIPGRELTCAVMGNKALDVCEILPEKHFQFYDYDSKYKSGGSLHVCPAQLSSNIYQNVQRMSLAAHQAIGCRGVSRSDFRFDEETGELVWLEINTQPGMTPTSLFPDIAKASGRTYGDIVQWMVEDASCMR.

The ATP-grasp domain maps to 102–300; that stretch reads KIVVASVGVS…YGDIVQWMVE (199 aa). ATP is bound at residue 128–183; it reads PMEPPYVIKPVCEGSSLGVIIVKENESVPSLNVVGSEWVYADTVIVEKYIPGRELT. Residues Asp253, Glu267, and Asn269 each coordinate Mg(2+).

The protein belongs to the D-alanine--D-alanine ligase family. Mg(2+) serves as cofactor. Requires Mn(2+) as cofactor.

Its subcellular location is the cytoplasm. It catalyses the reaction 2 D-alanine + ATP = D-alanyl-D-alanine + ADP + phosphate + H(+). It functions in the pathway cell wall biogenesis; peptidoglycan biosynthesis. Its function is as follows. Cell wall formation. The chain is D-alanine--D-alanine ligase from Bartonella henselae (strain ATCC 49882 / DSM 28221 / CCUG 30454 / Houston 1) (Rochalimaea henselae).